The following is a 653-amino-acid chain: Endoglin (653 aa).

The first 26 residues, 1–26 (MDRGVLPLPITLLFVIYSFVPTTGLA), serve as a signal peptide directing secretion. The tract at residues 27 to 47 (ERVGCDLQPVDPTRGEVTFTT) is OR1, N-terminal part. The interval 27–337 (ERVGCDLQPV…SSCGGVFQTT (311 aa)) is required for interaction with GDF2. Residues 27–581 (ERVGCDLQPV…IVSPDLSGKG (555 aa)) are Extracellular-facing. Cystine bridges form between cysteine 31–cysteine 209, cysteine 54–cysteine 184, cysteine 244–cysteine 330, cysteine 350–cysteine 382, cysteine 363–cysteine 442, cysteine 394–cysteine 412, and cysteine 493–cysteine 549. The OR2 stretch occupies residues 48–201 (SQVSEGCVAQ…MGATLEWQPR (154 aa)). N-linked (GlcNAc...) asparagine glycosylation is found at asparagine 89, asparagine 135, and asparagine 266. The tract at residues 202 to 330 (AQTPVQSCRL…SNVSLRASSC (129 aa)) is OR1, C-terminal part. An essential for interaction with GDF2 region spans residues 270–282 (QILTTGEYSVKIF). N-linked (GlcNAc...) asparagine glycans are attached at residues asparagine 307 and asparagine 322. The ZP domain maps to 363 to 510 (CGNQVMTLAL…GDMVELIQSR (148 aa)). A helical membrane pass occupies residues 582-606 (LVLPSVLGITFGAFLIGALLTAALW). Residues 607-653 (YIYSHTRGPSKREPVVAVAAPASSESSSTNHSIGSTQSTPCSTSSMA) are Cytoplasmic-facing. Residues 624–634 (VAAPASSESSS) show a composition bias toward low complexity. Residues 624-653 (VAAPASSESSSTNHSIGSTQSTPCSTSSMA) form a disordered region. Polar residues predominate over residues 635-653 (TNHSIGSTQSTPCSTSSMA). 2 positions are modified to phosphoserine; by TGFBR1: serine 641 and serine 644.

As to quaternary structure, homodimer; disulfide-linked. Forms a heteromeric complex with the signaling receptors for transforming growth factor-beta: TGFBR1 and/or TGFBR2. Interacts with TGFB1. It is able to bind TGFB1 and TGFB2 with high affinity, but not TGFB3. Interacts with GDF2, forming a heterotetramer with a 2:2 stoichiometry. Interacts with ACVRL1. Can form a heteromeric complex with GDF2 and ACVRL1. Interacts with BMP10. Interacts with DYNLT4. Interacts with ARRB2. Detected on blood vessels (at protein level). Detected on adult pulmonary artery, capillaries supporting the heart muscle and lung alveolar capillary endothelial cells. Endoglin is restricted to endothelial cells in all tissues except bone marrow and is also found in stromal cells within the connective tissue of intestine, stomach, heart, skeletal muscle, uterus, ovary, oviduct, testis and thymus.

It is found in the cell membrane. In terms of biological role, vascular endothelium glycoprotein that plays an important role in the regulation of angiogenesis. Required for normal structure and integrity of adult vasculature. Regulates the migration of vascular endothelial cells. Required for normal extraembryonic angiogenesis and for embryonic heart development. May regulate endothelial cell shape changes in response to blood flow, which drive vascular remodeling and establishment of normal vascular morphology during angiogenesis. May play a role in the binding of endothelial cells to integrins. Acts as a TGF-beta coreceptor and is involved in the TGF-beta/BMP signaling cascade that ultimately leads to the activation of SMAD transcription factors. Required for GDF2/BMP9 signaling through SMAD1 in endothelial cells and modulates TGFB1 signaling through SMAD3. The chain is Endoglin (Eng) from Mus musculus (Mouse).